Consider the following 56-residue polypeptide: Large ribosomal subunit protein bL32 (56 aa).

Over residues 1-20 (MAVPKRRTSRSNTRSRRSQW) the composition is skewed to basic residues. The tract at residues 1–24 (MAVPKRRTSRSNTRSRRSQWKAKV) is disordered.

Belongs to the bacterial ribosomal protein bL32 family.

The protein is Large ribosomal subunit protein bL32 of Frankia casuarinae (strain DSM 45818 / CECT 9043 / HFP020203 / CcI3).